The chain runs to 256 residues: Trans-aconitate 2-methyltransferase (256 aa).

Belongs to the methyltransferase superfamily. Tam family.

Its subcellular location is the cytoplasm. It carries out the reaction trans-aconitate + S-adenosyl-L-methionine = (E)-3-(methoxycarbonyl)pent-2-enedioate + S-adenosyl-L-homocysteine. In terms of biological role, catalyzes the S-adenosylmethionine monomethyl esterification of trans-aconitate. This is Trans-aconitate 2-methyltransferase from Rhodopseudomonas palustris (strain HaA2).